The sequence spans 154 residues: Transcriptional repressor NrdR (154 aa).

The segment at 3–34 (CPFCGHSNTQVLDTRMSEDGDAVRRRRRCEAC) is a zinc-finger region. Residues 49–139 (PAIVKKNGSR…VYRSFEDVAE (91 aa)) enclose the ATP-cone domain.

This sequence belongs to the NrdR family. Requires Zn(2+) as cofactor.

Functionally, negatively regulates transcription of bacterial ribonucleotide reductase nrd genes and operons by binding to NrdR-boxes. This chain is Transcriptional repressor NrdR, found in Cupriavidus pinatubonensis (strain JMP 134 / LMG 1197) (Cupriavidus necator (strain JMP 134)).